Reading from the N-terminus, the 104-residue chain is uncharacterized protein (104 aa).

It to M.jannaschii MJ1511.

This is an uncharacterized protein from Methanocaldococcus jannaschii (strain ATCC 43067 / DSM 2661 / JAL-1 / JCM 10045 / NBRC 100440) (Methanococcus jannaschii).